The following is an 82-amino-acid chain: Large ribosomal subunit protein eL14 (82 aa).

The protein belongs to the eukaryotic ribosomal protein eL14 family.

The protein is Large ribosomal subunit protein eL14 of Pyrococcus abyssi (strain GE5 / Orsay).